Reading from the N-terminus, the 469-residue chain is Putative dipeptidase SAR1836 (469 aa).

H84 contributes to the Zn(2+) binding site. D86 is a catalytic residue. A Zn(2+)-binding site is contributed by D115. The active-site Proton acceptor is the E149. Zn(2+)-binding residues include E150, D173, and H440.

Belongs to the peptidase M20A family. It depends on Zn(2+) as a cofactor.

The chain is Putative dipeptidase SAR1836 from Staphylococcus aureus (strain MRSA252).